Reading from the N-terminus, the 464-residue chain is Siroheme synthase (464 aa).

The precorrin-2 dehydrogenase /sirohydrochlorin ferrochelatase stretch occupies residues 1–203; it reads MKYLPLFHNL…GQGAEAERLL (203 aa). Residues 22–23 and 43–44 each bind NAD(+); these read EI and PE. S128 is modified (phosphoserine). Residues 216-464 are uroporphyrinogen-III C-methyltransferase; that stretch reads GEVYLVGAGP…AWFEGAQGQI (249 aa). Residue P225 coordinates S-adenosyl-L-methionine. The Proton acceptor role is filled by D248. K270 acts as the Proton donor in catalysis. Residues 301–303, I306, 331–332, M383, and G412 each bind S-adenosyl-L-methionine; these read GGD and TA.

In the N-terminal section; belongs to the precorrin-2 dehydrogenase / sirohydrochlorin ferrochelatase family. It in the C-terminal section; belongs to the precorrin methyltransferase family.

It carries out the reaction uroporphyrinogen III + 2 S-adenosyl-L-methionine = precorrin-2 + 2 S-adenosyl-L-homocysteine + H(+). The enzyme catalyses precorrin-2 + NAD(+) = sirohydrochlorin + NADH + 2 H(+). It catalyses the reaction siroheme + 2 H(+) = sirohydrochlorin + Fe(2+). Its pathway is cofactor biosynthesis; adenosylcobalamin biosynthesis; precorrin-2 from uroporphyrinogen III: step 1/1. The protein operates within cofactor biosynthesis; adenosylcobalamin biosynthesis; sirohydrochlorin from precorrin-2: step 1/1. It participates in porphyrin-containing compound metabolism; siroheme biosynthesis; precorrin-2 from uroporphyrinogen III: step 1/1. It functions in the pathway porphyrin-containing compound metabolism; siroheme biosynthesis; siroheme from sirohydrochlorin: step 1/1. Its pathway is porphyrin-containing compound metabolism; siroheme biosynthesis; sirohydrochlorin from precorrin-2: step 1/1. In terms of biological role, multifunctional enzyme that catalyzes the SAM-dependent methylations of uroporphyrinogen III at position C-2 and C-7 to form precorrin-2 via precorrin-1. Then it catalyzes the NAD-dependent ring dehydrogenation of precorrin-2 to yield sirohydrochlorin. Finally, it catalyzes the ferrochelation of sirohydrochlorin to yield siroheme. This chain is Siroheme synthase, found in Pseudomonas fluorescens (strain Pf0-1).